The chain runs to 251 residues: Urease accessory protein UreF (251 aa).

Residues 1–20 (MAPAPDPAPAGSAAPDPASA) form a disordered region. Residues 9–20 (PAGSAAPDPASA) are compositionally biased toward low complexity.

This sequence belongs to the UreF family. In terms of assembly, ureD, UreF and UreG form a complex that acts as a GTP-hydrolysis-dependent molecular chaperone, activating the urease apoprotein by helping to assemble the nickel containing metallocenter of UreC. The UreE protein probably delivers the nickel.

Its subcellular location is the cytoplasm. Its function is as follows. Required for maturation of urease via the functional incorporation of the urease nickel metallocenter. This is Urease accessory protein UreF from Paracidovorax citrulli (strain AAC00-1) (Acidovorax citrulli).